Here is a 65-residue protein sequence, read N- to C-terminus: Conotoxin Lt5.1 (65 aa).

A signal peptide spans 1-19 (MRCLPVFIILLLLIPSAPS). Residues 20–48 (VDAQRKTKDDVPLASFHDNAKRTLKRLWN) constitute a propeptide that is removed on maturation.

Belongs to the conotoxin T superfamily. In terms of processing, contains 2 disulfide bonds that can be either 'C1-C3, C2-C4' or 'C1-C4, C2-C3', since these disulfide connectivities have been observed for conotoxins with cysteine framework V (for examples, see AC P0DQQ7 and AC P81755). Expressed by the venom duct.

It localises to the secreted. This Conus litteratus (Lettered cone) protein is Conotoxin Lt5.1.